A 679-amino-acid polypeptide reads, in one-letter code: Glycine--tRNA ligase beta subunit (679 aa).

This sequence belongs to the class-II aminoacyl-tRNA synthetase family. Tetramer of two alpha and two beta subunits.

Its subcellular location is the cytoplasm. It carries out the reaction tRNA(Gly) + glycine + ATP = glycyl-tRNA(Gly) + AMP + diphosphate. In Streptococcus pyogenes serotype M12 (strain MGAS9429), this protein is Glycine--tRNA ligase beta subunit.